Consider the following 274-residue polypeptide: Ubiquinone biosynthesis protein COQ4 homolog, mitochondrial (274 aa).

The N-terminal 20 residues, 1–20 (MLRQTAFRSMKLNRTPGRYF), are a transit peptide targeting the mitochondrion. The interval 13–40 (NRTPGRYFTTAENMDTGSSQSPPDTEQK) is disordered. A compositionally biased stretch (polar residues) spans 22–36 (TAENMDTGSSQSPPD). Zn(2+)-binding residues include His-177, Asp-178, His-181, and Glu-193.

The protein belongs to the COQ4 family. As to quaternary structure, component of a multi-subunit COQ enzyme complex. It depends on Zn(2+) as a cofactor.

The protein localises to the mitochondrion inner membrane. The enzyme catalyses a 4-hydroxy-3-methoxy-5-(all-trans-polyprenyl)benzoate + H(+) = a 2-methoxy-6-(all-trans-polyprenyl)phenol + CO2. It participates in cofactor biosynthesis; ubiquinone biosynthesis. Its function is as follows. Lyase that catalyzes the C1-decarboxylation of 4-hydroxy-3-methoxy-5-(all-trans-polyprenyl)benzoic acid into 2-methoxy-6-(all-trans-polyprenyl)phenol during ubiquinone biosynthesis. This Aedes aegypti (Yellowfever mosquito) protein is Ubiquinone biosynthesis protein COQ4 homolog, mitochondrial.